Consider the following 347-residue polypeptide: G-protein coupled receptor homolog U12 (347 aa).

A run of 6 helical transmembrane segments spans residues Gly-36 to Tyr-56, Phe-67 to Thr-87, Leu-103 to Thr-124, Ile-147 to Thr-167, Ile-194 to Ile-214, and Ile-236 to Ile-256. Cysteines 101 and 176 form a disulfide. Residues Gln-321 to Leu-347 form a disordered region. The span at Lys-322–Val-341 shows a compositional bias: basic and acidic residues.

The protein belongs to the G-protein coupled receptor 1 family.

The protein localises to the membrane. Functionally, probable G-protein coupled receptor. This chain is G-protein coupled receptor homolog U12 (U12), found in Homo sapiens (Human).